The following is an 80-amino-acid chain: Cell division protein ZapB (80 aa).

Residues 3–80 are a coiled coil; the sequence is FEVLEQLEAK…NLLGKMDDVE (78 aa).

This sequence belongs to the ZapB family. In terms of assembly, homodimer. The ends of the coiled-coil dimer bind to each other, forming polymers. Interacts with FtsZ.

The protein resides in the cytoplasm. Non-essential, abundant cell division factor that is required for proper Z-ring formation. It is recruited early to the divisome by direct interaction with FtsZ, stimulating Z-ring assembly and thereby promoting cell division earlier in the cell cycle. Its recruitment to the Z-ring requires functional FtsA or ZipA. This chain is Cell division protein ZapB, found in Vibrio atlanticus (strain LGP32) (Vibrio splendidus (strain Mel32)).